The chain runs to 205 residues: Protein GrpE (205 aa).

Over residues 1-18 (MSEEVKNSVETEENKASK) the composition is skewed to basic and acidic residues. The segment at 1–60 (MSEEVKNSVETEENKASKDNATQAPNPTENHNTAQETEKAENSEKTESATQENESLDKLK) is disordered. Positions 19–35 (DNATQAPNPTENHNTAQ) are enriched in polar residues. Over residues 36 to 47 (ETEKAENSEKTE) the composition is skewed to basic and acidic residues.

It belongs to the GrpE family. In terms of assembly, homodimer.

The protein localises to the cytoplasm. Participates actively in the response to hyperosmotic and heat shock by preventing the aggregation of stress-denatured proteins, in association with DnaK and GrpE. It is the nucleotide exchange factor for DnaK and may function as a thermosensor. Unfolded proteins bind initially to DnaJ; upon interaction with the DnaJ-bound protein, DnaK hydrolyzes its bound ATP, resulting in the formation of a stable complex. GrpE releases ADP from DnaK; ATP binding to DnaK triggers the release of the substrate protein, thus completing the reaction cycle. Several rounds of ATP-dependent interactions between DnaJ, DnaK and GrpE are required for fully efficient folding. The chain is Protein GrpE from Chloroherpeton thalassium (strain ATCC 35110 / GB-78).